Here is a 349-residue protein sequence, read N- to C-terminus: DNA replication and repair protein RecF (349 aa).

Residue 30–37 (GKNGSGKT) coordinates ATP.

It belongs to the RecF family.

It localises to the cytoplasm. In terms of biological role, the RecF protein is involved in DNA metabolism; it is required for DNA replication and normal SOS inducibility. RecF binds preferentially to single-stranded, linear DNA. It also seems to bind ATP. The protein is DNA replication and repair protein RecF of Francisella tularensis subsp. tularensis (strain FSC 198).